The primary structure comprises 62 residues: Conotoxin Pl168 (62 aa).

Positions 1–21 (MGMRMMFTVFLLVVLATTVVS) are cleaved as a signal peptide. Positions 22 to 40 (FTLDRASDGANAAADLVAR) are excised as a propeptide. 2 cysteine pairs are disulfide-bonded: Cys-46-Cys-52 and Cys-47-Cys-61.

This sequence belongs to the conotoxin A superfamily. Post-translationally, both Pro-53 and Pro-62 are not in cis/trans isomerization. As to expression, expressed by the venom duct.

The protein localises to the secreted. In terms of biological role, probable neurotoxin with unknown target. Possibly targets ion channels. This chain is Conotoxin Pl168, found in Conus planorbis (Planorbis cone).